A 1440-amino-acid polypeptide reads, in one-letter code: Bridge-like lipid transfer protein family member 3A (1440 aa).

The region spanning Gly-3–Glu-95 is the Chorein N-terminal domain. Disordered regions lie at residues Ser-267–Ser-307, Ala-430–Pro-456, and Lys-751–Asp-780. Positions Ser-287–Ser-307 are enriched in low complexity. A phosphoserine mark is found at Ser-444, Ser-446, Ser-755, and Ser-758. The stretch at Ala-837–Thr-860 forms a coiled coil. Residues Val-891–Leu-1008 are disordered. A compositionally biased stretch (basic and acidic residues) spans Ser-911–Ala-920. The segment covering Ala-985–Pro-995 has biased composition (low complexity). Phosphoserine occurs at positions 988, 1103, and 1106. The tract at residues Ser-1106–Pro-1180 is disordered. Low complexity predominate over residues Leu-1134–Ser-1150. The segment covering Asn-1151–Pro-1180 has biased composition (polar residues). Residues Lys-1401–Asn-1435 are a coiled coil.

Homodimer (Potential). Interacts with UHRF1.

The protein localises to the late endosome. Tube-forming lipid transport protein which probably mediates the transfer of lipids between membranes at organelle contact sites. May be involved in the retrograde traffic of vesicle clusters in the endocytic pathway to the Golgi complex. The sequence is that of Bridge-like lipid transfer protein family member 3A from Homo sapiens (Human).